The primary structure comprises 342 residues: Ribosomal RNA small subunit methyltransferase C (342 aa).

It belongs to the methyltransferase superfamily. RsmC family. As to quaternary structure, monomer.

Its subcellular location is the cytoplasm. It carries out the reaction guanosine(1207) in 16S rRNA + S-adenosyl-L-methionine = N(2)-methylguanosine(1207) in 16S rRNA + S-adenosyl-L-homocysteine + H(+). Its function is as follows. Specifically methylates the guanine in position 1207 of 16S rRNA in the 30S particle. The protein is Ribosomal RNA small subunit methyltransferase C of Salmonella arizonae (strain ATCC BAA-731 / CDC346-86 / RSK2980).